Reading from the N-terminus, the 253-residue chain is Triosephosphate isomerase (253 aa).

9-11 (NWK) contacts substrate. Histidine 96 acts as the Electrophile in catalysis. Glutamate 169 acts as the Proton acceptor in catalysis. Substrate-binding positions include glycine 175, serine 215, and 236–237 (GG).

This sequence belongs to the triosephosphate isomerase family. Homodimer.

The protein resides in the cytoplasm. It catalyses the reaction D-glyceraldehyde 3-phosphate = dihydroxyacetone phosphate. It participates in carbohydrate biosynthesis; gluconeogenesis. It functions in the pathway carbohydrate degradation; glycolysis; D-glyceraldehyde 3-phosphate from glycerone phosphate: step 1/1. Functionally, involved in the gluconeogenesis. Catalyzes stereospecifically the conversion of dihydroxyacetone phosphate (DHAP) to D-glyceraldehyde-3-phosphate (G3P). The polypeptide is Triosephosphate isomerase (Borrelia garinii subsp. bavariensis (strain ATCC BAA-2496 / DSM 23469 / PBi) (Borreliella bavariensis)).